The chain runs to 452 residues: Imaginal disk growth factor 6 (452 aa).

The signal sequence occupies residues methionine 1–alanine 18. The GH18 domain maps to lysine 29 to asparagine 452. Cysteine 33 and cysteine 60 are disulfide-bonded. Residue asparagine 233 is glycosylated (N-linked (GlcNAc...) asparagine). A disulfide bond links cysteine 352 and cysteine 435.

It belongs to the glycosyl hydrolase 18 family. IDGF subfamily. Glycosylated. In larvae, it is expressed in the fat body and by hemocytes.

It localises to the secreted. Functionally, probably required to stimulate the proliferation, polarization and motility of imaginal disk cells. May act by stabilizing the binding of insulin-like peptides to its receptor through a simultaneous interaction with both molecules to form a multiprotein signaling complex. This Drosophila melanogaster (Fruit fly) protein is Imaginal disk growth factor 6.